We begin with the raw amino-acid sequence, 175 residues long: Bifunctional protein PyrR (175 aa).

Residues 40-41 (TR), arginine 85, 102-110 (DDVLYTGRT), arginine 135, and valine 159 each bind substrate. The PRPP-binding signature appears at 98-110 (VVIIDDVLYTGRT).

It belongs to the purine/pyrimidine phosphoribosyltransferase family. PyrR subfamily. As to quaternary structure, homodimer and homohexamer; in equilibrium.

It catalyses the reaction UMP + diphosphate = 5-phospho-alpha-D-ribose 1-diphosphate + uracil. Its function is as follows. Regulates transcriptional attenuation of the pyrimidine nucleotide (pyr) operon by binding in a uridine-dependent manner to specific sites on pyr mRNA. This disrupts an antiterminator hairpin in the RNA and favors formation of a downstream transcription terminator, leading to a reduced expression of downstream genes. Functionally, also displays a weak uracil phosphoribosyltransferase activity which is not physiologically significant. The sequence is that of Bifunctional protein PyrR from Staphylococcus epidermidis (strain ATCC 35984 / DSM 28319 / BCRC 17069 / CCUG 31568 / BM 3577 / RP62A).